A 94-amino-acid chain; its full sequence is Large ribosomal subunit protein bL25 (94 aa).

The protein belongs to the bacterial ribosomal protein bL25 family. Part of the 50S ribosomal subunit; part of the 5S rRNA/L5/L18/L25 subcomplex. Contacts the 5S rRNA. Binds to the 5S rRNA independently of L5 and L18.

This is one of the proteins that binds to the 5S RNA in the ribosome where it forms part of the central protuberance. This is Large ribosomal subunit protein bL25 from Shigella boydii serotype 18 (strain CDC 3083-94 / BS512).